A 229-amino-acid polypeptide reads, in one-letter code: Potassium/proton antiporter CemA (229 aa).

3 consecutive transmembrane segments (helical) span residues 7–27, 107–127, and 189–209; these read FTPL…SFSV, ILHF…SILG, and IISG…KYWI.

It belongs to the CemA family.

It localises to the plastid. The protein resides in the chloroplast inner membrane. It carries out the reaction K(+)(in) + H(+)(out) = K(+)(out) + H(+)(in). Functionally, contributes to K(+)/H(+) antiport activity by supporting proton efflux to control proton extrusion and homeostasis in chloroplasts in a light-dependent manner to modulate photosynthesis. Prevents excessive induction of non-photochemical quenching (NPQ) under continuous-light conditions. Indirectly promotes efficient inorganic carbon uptake into chloroplasts. This Atropa belladonna (Belladonna) protein is Potassium/proton antiporter CemA.